A 339-amino-acid chain; its full sequence is DNA-directed RNA polymerase subunit alpha (339 aa).

Residues 1-233 (MVREEVAGST…DLFLPFLHAE (233 aa)) are alpha N-terminal domain (alpha-NTD). Residues 264–339 (KKGIPLNCIF…IDLLKNKLSF (76 aa)) form an alpha C-terminal domain (alpha-CTD) region.

The protein belongs to the RNA polymerase alpha chain family. In terms of assembly, in plastids the minimal PEP RNA polymerase catalytic core is composed of four subunits: alpha, beta, beta', and beta''. When a (nuclear-encoded) sigma factor is associated with the core the holoenzyme is formed, which can initiate transcription.

The protein resides in the plastid. The protein localises to the chloroplast. The catalysed reaction is RNA(n) + a ribonucleoside 5'-triphosphate = RNA(n+1) + diphosphate. Functionally, DNA-dependent RNA polymerase catalyzes the transcription of DNA into RNA using the four ribonucleoside triphosphates as substrates. This chain is DNA-directed RNA polymerase subunit alpha, found in Thinopyrum elongatum (Tall wheatgrass).